A 675-amino-acid chain; its full sequence is Protein PALS1 (675 aa).

Disordered stretches follow at residues 1–34 (MTTS…KHRE) and 51–78 (RRSA…KKQE). Residues 1–345 (MTTSHMNGHV…QQIKPPPAKE (345 aa)) form a required for the correct localization of PALS1 and PATJ at cell-cell contacts and the normal formation of tight junctions and adherens junctions region. Composition is skewed to basic and acidic residues over residues 10 to 34 (VTEE…KHRE) and 54 to 78 (AQLE…KKQE). Phosphoserine occurs at positions 14 and 25. The interval 21 to 140 (VDLASPEEHQ…LKHIQHTLID (120 aa)) is interaction with PARD6B. Phosphoserine occurs at positions 83 and 84. 2 consecutive L27 domains span residues 120–177 (KILE…NKAS) and 179–235 (PFPL…MQLE). Positions 181–243 (PLISNAQDLA…LEPITDERVY (63 aa)) are interaction with LIN7C. A PDZ domain is found at 256-336 (IVRIEKARDI…TLTFVLIPSQ (81 aa)). Positions 345–417 (ETVIHVKAHF…PGKSFQQQRE (73 aa)) constitute an SH3 domain. Positions 479–660 (KRPIILIGPQ…AYQELLRLIN (182 aa)) constitute a Guanylate kinase-like domain. 486-493 (GPQNCGQN) is a binding site for ATP.

Belongs to the MAGUK family. In terms of assembly, heterodimer with MPP1. Forms a heterotrimeric complex composed of PALS1, LIN7B and PATJ; the N-terminal L27 domain of PALS1 interacts with the L27 domain of PATJ and the C-terminal L27 domain of PALS1 interacts with the L27 domain of LIN7B. Component of a complex composed of PALS1, CRB1 and MPP4. Component of a complex whose core is composed of ARHGAP17, AMOT, PALS1, PATJ and PARD3/PAR3. Component of a complex composed of PALS1, CRB1 and EPB41L5. Within the complex, interacts (via HOOK domain) with EPB41L5 (via FERM domain), and interacts with CRB1 (via intracellular domain). Component of a complex composed of PALS1, MPP3 and CRB1; PALS1 acts as a bridging protein between MPP3 (via guanylate kinase-like domain) and CRB1. Component of a complex composed of CRB3, PALS1 and PATJ. As part of the Crumbs complex; interacts with WWP1, the interaction is enhanced by AMOTL2 and facilitates WWP1 localization to the plasma membrane. The Crumbs complex promotes monoubiquitination of AMOTL2 by WWP1, which activates the Hippo signaling pathway. Interacts (via PDZ domain) with PATJ (via N-terminus). Interacts with EZR. Interacts (via PDZ domain) with CRB1 (via C-terminal ERLI motif). While the PDZ domain is sufficient for interaction with CRB1, the adjacent SH3 and guanylate kinase-like domains are likely to contribute to a high affinity interaction. Interacts with WWTR1/TAZ (via WW domain). Interacts with MPP7. Interacts (via PDZ domain) with CRB3 (via C-terminus). Interacts with LIN7C. Interacts with MPDZ. Interacts with PARD6B. Interacts with SC6A1. Interacts with CDH5; the interaction promotes PALS1 localization to cell junctions and is required for CDH5-mediated vascular lumen formation and endothelial cell. Interacts with NPHP1 (via coiled coil and SH3 domains). Interacts with NPHP4. Interacts with CRB2.

Its subcellular location is the golgi apparatus. It is found in the cell membrane. The protein resides in the endomembrane system. It localises to the cell junction. The protein localises to the tight junction. Its subcellular location is the adherens junction. It is found in the cell projection. The protein resides in the axon. It localises to the perikaryon. The protein localises to the apical cell membrane. Plays a role in tight junction biogenesis and in the establishment of cell polarity in epithelial cells. Also involved in adherens junction biogenesis by ensuring correct localization of the exocyst complex protein EXOC4/SEC8 which allows trafficking of adherens junction structural component CDH1 to the cell surface. Plays a role through its interaction with CDH5 in vascular lumen formation and endothelial membrane polarity. Required during embryonic and postnatal retinal development. Required for the maintenance of cerebellar progenitor cells in an undifferentiated proliferative state, preventing premature differentiation, and is required for cerebellar histogenesis, fissure formation, cerebellar layer organization and cortical development. Plays a role in neuronal progenitor cell survival, potentially via promotion of mTOR signaling. Plays a role in the radial and longitudinal extension of the myelin sheath in Schwann cells. May modulate SC6A1/GAT1-mediated GABA uptake by stabilizing the transporter. May play a role in the T-cell receptor-mediated activation of NF-kappa-B. Required for localization of EZR to the apical membrane of parietal cells and may play a role in the dynamic remodeling of the apical cytoskeleton. Required for the normal polarized localization of the vesicular marker STX4. Required for the correct trafficking of the myelin proteins PMP22 and MAG. Involved in promoting phosphorylation and cytoplasmic retention of transcriptional coactivators YAP1 and WWTR1/TAZ which leads to suppression of TGFB1-dependent transcription of target genes such as CCN2/CTGF, SERPINE1/PAI1, SNAI1/SNAIL1 and SMAD7. This Pongo abelii (Sumatran orangutan) protein is Protein PALS1.